The following is a 291-amino-acid chain: Light-independent protochlorophyllide reductase iron-sulfur ATP-binding protein (291 aa).

Residues G10–T15 and K39 contribute to the ATP site. Residue S14 coordinates Mg(2+). Positions 95 and 129 each coordinate [4Fe-4S] cluster. Position 180–181 (N180–R181) interacts with ATP.

Belongs to the NifH/BchL/ChlL family. In terms of assembly, homodimer. Protochlorophyllide reductase is composed of three subunits; ChlL, ChlN and ChlB. The cofactor is [4Fe-4S] cluster.

It localises to the plastid. It is found in the chloroplast. It carries out the reaction chlorophyllide a + oxidized 2[4Fe-4S]-[ferredoxin] + 2 ADP + 2 phosphate = protochlorophyllide a + reduced 2[4Fe-4S]-[ferredoxin] + 2 ATP + 2 H2O. It participates in porphyrin-containing compound metabolism; chlorophyll biosynthesis (light-independent). Component of the dark-operative protochlorophyllide reductase (DPOR) that uses Mg-ATP and reduced ferredoxin to reduce ring D of protochlorophyllide (Pchlide) to form chlorophyllide a (Chlide). This reaction is light-independent. The L component serves as a unique electron donor to the NB-component of the complex, and binds Mg-ATP. In Picea abies (Norway spruce), this protein is Light-independent protochlorophyllide reductase iron-sulfur ATP-binding protein.